Consider the following 452-residue polypeptide: Phosphatidate cytidylyltransferase, mitochondrial (452 aa).

Belongs to the TAM41 family. Requires Mg(2+) as cofactor.

It is found in the mitochondrion inner membrane. It carries out the reaction a 1,2-diacyl-sn-glycero-3-phosphate + CTP + H(+) = a CDP-1,2-diacyl-sn-glycerol + diphosphate. Its pathway is phospholipid metabolism; CDP-diacylglycerol biosynthesis; CDP-diacylglycerol from sn-glycerol 3-phosphate: step 3/3. Its function is as follows. Catalyzes the conversion of phosphatidic acid (PA) to CDP-diacylglycerol (CDP-DAG), an essential intermediate in the synthesis of phosphatidylglycerol, cardiolipin and phosphatidylinositol. The chain is Phosphatidate cytidylyltransferase, mitochondrial (TAMM41) from Homo sapiens (Human).